The primary structure comprises 139 residues: MAMTYHLDVVSAEQQMFSGLVEKIQVTGSEGELGIYPGHAPLLTAIKPGMIRIVKQHGHEEFIYLSGGILEVQSGNVTVLADTAIRGQDLDEARAMEAKRKAEEHISSSHGDVDYAQASAELAKAIAQLRVIELTKKAM.

It belongs to the ATPase epsilon chain family. As to quaternary structure, F-type ATPases have 2 components, CF(1) - the catalytic core - and CF(0) - the membrane proton channel. CF(1) has five subunits: alpha(3), beta(3), gamma(1), delta(1), epsilon(1). CF(0) has three main subunits: a, b and c.

It localises to the cell inner membrane. In terms of biological role, produces ATP from ADP in the presence of a proton gradient across the membrane. This chain is ATP synthase epsilon chain, found in Shigella boydii serotype 18 (strain CDC 3083-94 / BS512).